We begin with the raw amino-acid sequence, 153 residues long: MSEKYVVTWDMLQIHARKLAQRLLPVEQWKGIIAVSRGGLVPGALLARELGIRHVDTVCISSYDHNNQRELKVLKKAEGDGEGFIVVDDLVDTGGTAQAIREIYPKAHFVTIFAKPAGQPLVDDYIVDIPQDTWIEQPWDMGVVFVPPICEGR.

5-phospho-alpha-D-ribose 1-diphosphate is bound by residues 37-38 (RG), R69, and 88-96 (DDLVDTGGT). Residue R69 participates in GMP binding. D89 contributes to the Mg(2+) binding site. Guanine contacts are provided by D92 and I135. Residues D92 and I135 each contribute to the xanthine site. Residues 92–96 (DTGGT) and 134–135 (WI) contribute to the GMP site.

Belongs to the purine/pyrimidine phosphoribosyltransferase family. XGPT subfamily. As to quaternary structure, homotetramer. Mg(2+) is required as a cofactor.

It is found in the cell inner membrane. The catalysed reaction is GMP + diphosphate = guanine + 5-phospho-alpha-D-ribose 1-diphosphate. It carries out the reaction XMP + diphosphate = xanthine + 5-phospho-alpha-D-ribose 1-diphosphate. The enzyme catalyses IMP + diphosphate = hypoxanthine + 5-phospho-alpha-D-ribose 1-diphosphate. It functions in the pathway purine metabolism; GMP biosynthesis via salvage pathway; GMP from guanine: step 1/1. Its pathway is purine metabolism; XMP biosynthesis via salvage pathway; XMP from xanthine: step 1/1. Purine salvage pathway enzyme that catalyzes the transfer of the ribosyl-5-phosphate group from 5-phospho-alpha-D-ribose 1-diphosphate (PRPP) to the N9 position of the 6-oxopurines guanine and xanthine to form the corresponding ribonucleotides GMP (guanosine 5'-monophosphate) and XMP (xanthosine 5'-monophosphate), with the release of PPi. To a lesser extent, also acts on hypoxanthine. This Photorhabdus laumondii subsp. laumondii (strain DSM 15139 / CIP 105565 / TT01) (Photorhabdus luminescens subsp. laumondii) protein is Xanthine-guanine phosphoribosyltransferase.